A 376-amino-acid chain; its full sequence is Queuine tRNA-ribosyltransferase (376 aa).

Catalysis depends on Asp93, which acts as the Proton acceptor. Substrate is bound by residues 93-97 (DSGGF), Asp147, Gln190, and Gly217. The interval 248–254 (GVGTPDD) is RNA binding. The active-site Nucleophile is the Asp267. The RNA binding; important for wobble base 34 recognition stretch occupies residues 272–276 (TRSGR).

The protein belongs to the queuine tRNA-ribosyltransferase family. As to quaternary structure, homodimer. Within each dimer, one monomer is responsible for RNA recognition and catalysis, while the other monomer binds to the replacement base PreQ1.

It catalyses the reaction 7-aminomethyl-7-carbaguanine + guanosine(34) in tRNA = 7-aminomethyl-7-carbaguanosine(34) in tRNA + guanine. Its pathway is tRNA modification; tRNA-queuosine biosynthesis. In terms of biological role, catalyzes the base-exchange of a guanine (G) residue with the queuine precursor 7-aminomethyl-7-deazaguanine (PreQ1) at position 34 (anticodon wobble position) in tRNAs with GU(N) anticodons (tRNA-Asp, -Asn, -His and -Tyr). Catalysis occurs through a double-displacement mechanism. The nucleophile active site attacks the C1' of nucleotide 34 to detach the guanine base from the RNA, forming a covalent enzyme-RNA intermediate. The proton acceptor active site deprotonates the incoming PreQ1, allowing a nucleophilic attack on the C1' of the ribose to form the product. After dissociation, two additional enzymatic reactions on the tRNA convert PreQ1 to queuine (Q), resulting in the hypermodified nucleoside queuosine (7-(((4,5-cis-dihydroxy-2-cyclopenten-1-yl)amino)methyl)-7-deazaguanosine). In Agrobacterium fabrum (strain C58 / ATCC 33970) (Agrobacterium tumefaciens (strain C58)), this protein is Queuine tRNA-ribosyltransferase.